The chain runs to 427 residues: Forkhead box protein A1-B (427 aa).

The fork-head DNA-binding region spans 157 to 251 (KPPYSYISLI…ENGCYLRRQK (95 aa)). Over residues 256 to 272 (EKTQGGKGNQDGRKDHS) the composition is skewed to basic and acidic residues. A disordered region spans residues 256-336 (EKTQGGKGNQ…HQNHSTHSLA (81 aa)). Residues 285-302 (SSQMDSSSSMSNPSSSPQ) are compositionally biased toward low complexity. Positions 323 to 334 (PLSSHQNHSTHS) are enriched in polar residues.

Present in the vegetal pole and marginal zone but not the animal pole of gastrulae and in equal levels in the dorsal and ventral halves of both gastrulae and neurulae. At neurula stage, expressed in the notochord. During tailbud stages, expressed in the foregut, brain, hypocord, neural floor plate and in two lines of cells just dorsal and ventral to the notochord. Expressed in the adult liver.

The protein localises to the nucleus. In terms of biological role, probable transcription factor. The protein is Forkhead box protein A1-B (foxa1-b) of Xenopus laevis (African clawed frog).